The sequence spans 63 residues: Conotoxin Gm5.1 (63 aa).

Positions methionine 1–threonine 21 are cleaved as a signal peptide. The propeptide occupies valine 22–arginine 50.

This sequence belongs to the conotoxin T superfamily. Contains 2 disulfide bonds that can be either 'C1-C3, C2-C4' or 'C1-C4, C2-C3', since these disulfide connectivities have been observed for conotoxins with cysteine framework V (for examples, see AC P0DQQ7 and AC P81755). As to expression, expressed by the venom duct.

It localises to the secreted. The chain is Conotoxin Gm5.1 from Conus gloriamaris (Glory-of-the-Sea cone).